The following is a 399-amino-acid chain: S-adenosylmethionine synthase (399 aa).

Residue histidine 15 participates in ATP binding. Aspartate 17 lines the Mg(2+) pocket. Glutamate 43 contacts K(+). Residues glutamate 56 and glutamine 99 each coordinate L-methionine. Residues 99-109 (QSADIAQGVDN) are flexible loop. ATP contacts are provided by residues 174-176 (DGK), 244-245 (RF), aspartate 253, 259-260 (RK), alanine 276, and lysine 280. Position 253 (aspartate 253) interacts with L-methionine. Lysine 284 is an L-methionine binding site.

This sequence belongs to the AdoMet synthase family. Homotetramer; dimer of dimers. It depends on Mg(2+) as a cofactor. Requires K(+) as cofactor.

Its subcellular location is the cytoplasm. The enzyme catalyses L-methionine + ATP + H2O = S-adenosyl-L-methionine + phosphate + diphosphate. It participates in amino-acid biosynthesis; S-adenosyl-L-methionine biosynthesis; S-adenosyl-L-methionine from L-methionine: step 1/1. In terms of biological role, catalyzes the formation of S-adenosylmethionine (AdoMet) from methionine and ATP. The overall synthetic reaction is composed of two sequential steps, AdoMet formation and the subsequent tripolyphosphate hydrolysis which occurs prior to release of AdoMet from the enzyme. This chain is S-adenosylmethionine synthase, found in Salinispora arenicola (strain CNS-205).